The following is a 432-amino-acid chain: Protein RETICULATA, chloroplastic (432 aa).

The N-terminal 47 residues, 1–47 (MAGCAMNLQFSSVVKVRNEISSFGICNRDFVFRDLAKAMKVPVLRIR), are a transit peptide targeting the chloroplast. Positions 109–140 (GNVGDGFNGSDGNGGGGGGGNGGEGDGEGEDY) are disordered. Positions 111–132 (VGDGFNGSDGNGGGGGGGNGGE) are enriched in gly residues. A run of 2 helical transmembrane segments spans residues 249-269 (LYVADLLVGTVVNIALVGMLA) and 322-342 (IMYGAVGFGCGIVGQGIANLI).

The protein belongs to the RETICULATA family. As to expression, highly expressed in the vasculature of developing leaf primordia, margins of fully expanded leaves, hydathodes of rosette of cauline leaves, basal region of the lamina, stipules, root tips, stamens and in the abscission zone of the funiculus.

It is found in the plastid. The protein resides in the chloroplast membrane. In terms of biological role, may play a role in leaf development. Required for leaf mesophyll cell division in the early stages of leaf organogenesis. Acts in a developmental pathway that involves PPT1/CUE1 but does not include ASE2/DOV1. This is Protein RETICULATA, chloroplastic from Arabidopsis thaliana (Mouse-ear cress).